The primary structure comprises 382 residues: tRNA(Ile)-lysidine synthase (382 aa).

An ATP-binding site is contributed by 50-55 (SGGRDS).

It belongs to the tRNA(Ile)-lysidine synthase family.

Its subcellular location is the cytoplasm. It catalyses the reaction cytidine(34) in tRNA(Ile2) + L-lysine + ATP = lysidine(34) in tRNA(Ile2) + AMP + diphosphate + H(+). In terms of biological role, ligates lysine onto the cytidine present at position 34 of the AUA codon-specific tRNA(Ile) that contains the anticodon CAU, in an ATP-dependent manner. Cytidine is converted to lysidine, thus changing the amino acid specificity of the tRNA from methionine to isoleucine. The sequence is that of tRNA(Ile)-lysidine synthase from Bifidobacterium animalis subsp. lactis (strain AD011).